The primary structure comprises 59 residues: uncharacterized protein (59 aa).

A helical membrane pass occupies residues 7–27 (LLLLVAIALISAFALTVTGVV).

The protein resides in the membrane. This is an uncharacterized protein from Pyrobaculum aerophilum (strain ATCC 51768 / DSM 7523 / JCM 9630 / CIP 104966 / NBRC 100827 / IM2).